The following is a 244-amino-acid chain: Ribonuclease PH (244 aa).

Phosphate contacts are provided by residues Arg87 and 125–127 (GTR).

Belongs to the RNase PH family. As to quaternary structure, homohexameric ring arranged as a trimer of dimers.

The catalysed reaction is tRNA(n+1) + phosphate = tRNA(n) + a ribonucleoside 5'-diphosphate. Its function is as follows. Phosphorolytic 3'-5' exoribonuclease that plays an important role in tRNA 3'-end maturation. Removes nucleotide residues following the 3'-CCA terminus of tRNAs; can also add nucleotides to the ends of RNA molecules by using nucleoside diphosphates as substrates, but this may not be physiologically important. Probably plays a role in initiation of 16S rRNA degradation (leading to ribosome degradation) during starvation. This chain is Ribonuclease PH, found in Synechococcus sp. (strain JA-2-3B'a(2-13)) (Cyanobacteria bacterium Yellowstone B-Prime).